The following is a 412-amino-acid chain: Peptidase T (412 aa).

Residue histidine 78 participates in Zn(2+) binding. Aspartate 80 is an active-site residue. Aspartate 140 contributes to the Zn(2+) binding site. Glutamate 173 functions as the Proton acceptor in the catalytic mechanism. Zn(2+) is bound by residues glutamate 174, aspartate 196, and histidine 379.

This sequence belongs to the peptidase M20B family. The cofactor is Zn(2+).

The protein localises to the cytoplasm. The catalysed reaction is Release of the N-terminal residue from a tripeptide.. Functionally, cleaves the N-terminal amino acid of tripeptides. The protein is Peptidase T of Edwardsiella ictaluri (strain 93-146).